Consider the following 207-residue polypeptide: dITP/XTP pyrophosphatase (207 aa).

Ser-7–Lys-12 is a substrate binding site. Asp-72 (proton acceptor) is an active-site residue. Residue Asp-72 coordinates Mg(2+). Substrate-binding positions include Ser-73, Phe-155 to Asp-158, Lys-184, and His-189 to Arg-190.

It belongs to the HAM1 NTPase family. As to quaternary structure, homodimer. It depends on Mg(2+) as a cofactor.

It carries out the reaction XTP + H2O = XMP + diphosphate + H(+). It catalyses the reaction dITP + H2O = dIMP + diphosphate + H(+). The catalysed reaction is ITP + H2O = IMP + diphosphate + H(+). Pyrophosphatase that catalyzes the hydrolysis of nucleoside triphosphates to their monophosphate derivatives, with a high preference for the non-canonical purine nucleotides XTP (xanthosine triphosphate), dITP (deoxyinosine triphosphate) and ITP. Seems to function as a house-cleaning enzyme that removes non-canonical purine nucleotides from the nucleotide pool, thus preventing their incorporation into DNA/RNA and avoiding chromosomal lesions. The protein is dITP/XTP pyrophosphatase of Corynebacterium efficiens (strain DSM 44549 / YS-314 / AJ 12310 / JCM 11189 / NBRC 100395).